The chain runs to 339 residues: MKDTEKKTEKELVWDECVDILENVKANSFKATLEYYLASDKKTKKAKPAKVKKVKEPKAKAVKPEQVKPTKTTKAPKPKKPKKQGGLISQWKEKLEAPYRTPYVEQKQGMVISIDKMWKHVHGEDSKEQIAILSDVSLEIGYGEIVIILGPSGSGKTTLLNLIGGYDSISLGSCVVANCPLEKCTTEQLLTYRKLNLGYVYQRYNLIELLSAYDNIAISQNLIPKEQRHLDIEELAAKLDIKEILYKFPYEMSGGQKQRVAIARAIIKEPRLLLCDEPTGALDSNSAENIIALLQAINKEYKQTILMVTHDETLTRIANRIIKISDGKIVSNELVRPLS.

Positions 41 to 87 (KKTKKAKPAKVKKVKEPKAKAVKPEQVKPTKTTKAPKPKKPKKQGGL) are disordered. Positions 42–53 (KTKKAKPAKVKK) are enriched in basic residues. Residues 54 to 68 (VKEPKAKAVKPEQVK) show a composition bias toward basic and acidic residues. Residues 74–83 (KAPKPKKPKK) are compositionally biased toward basic residues. In terms of domain architecture, ABC transporter spans 112–338 (ISIDKMWKHV…IVSNELVRPL (227 aa)). 150-157 (GPSGSGKT) contacts ATP.

The protein belongs to the ABC transporter superfamily.

In Mycoplasma pneumoniae (strain ATCC 29342 / M129 / Subtype 1) (Mycoplasmoides pneumoniae), this protein is Putative ABC transporter ATP-binding protein MG467 homolog.